The following is a 194-amino-acid chain: dTTP/UTP pyrophosphatase (194 aa).

Asp73 serves as the catalytic Proton acceptor.

Belongs to the Maf family. YhdE subfamily. Requires a divalent metal cation as cofactor.

It is found in the cytoplasm. The enzyme catalyses dTTP + H2O = dTMP + diphosphate + H(+). The catalysed reaction is UTP + H2O = UMP + diphosphate + H(+). Nucleoside triphosphate pyrophosphatase that hydrolyzes dTTP and UTP. May have a dual role in cell division arrest and in preventing the incorporation of modified nucleotides into cellular nucleic acids. The polypeptide is dTTP/UTP pyrophosphatase (Clostridium botulinum (strain Loch Maree / Type A3)).